The following is a 125-amino-acid chain: Small ribosomal subunit protein bS6 (125 aa).

It belongs to the bacterial ribosomal protein bS6 family.

Binds together with bS18 to 16S ribosomal RNA. In Pasteurella multocida (strain Pm70), this protein is Small ribosomal subunit protein bS6 (rpsF).